The primary structure comprises 125 residues: Gene 61 protein (125 aa).

The chain is Gene 61 protein (61) from Mycobacterium phage D29 (Mycobacteriophage D29).